The sequence spans 459 residues: Glycosyl hydrolase family 109 protein (459 aa).

A signal peptide (tat-type signal) is located at residues 1–31 (MHNIHRRHFLKAAGAVTAGLITANITASTHA). NAD(+) is bound by residues 64–65 (ER), D86, 135–138 (WEWH), 155–156 (EV), and N184. Substrate contacts are provided by residues Y213, R232, 244 to 247 (YPTH), and Y326. NAD(+) is bound at residue Y244.

The protein belongs to the Gfo/Idh/MocA family. Glycosyl hydrolase 109 subfamily. Requires NAD(+) as cofactor. Post-translationally, predicted to be exported by the Tat system. The position of the signal peptide cleavage has not been experimentally proven.

Glycosidase. This Shewanella sp. (strain W3-18-1) protein is Glycosyl hydrolase family 109 protein.